The sequence spans 329 residues: G-protein coupled bile acid receptor 1 (329 aa).

At 1-18 (MMSHNTTELSAIPRGVQE) the chain is on the extracellular side. N-linked (GlcNAc...) asparagine glycosylation occurs at Asn5. Residues 19 to 39 (LSLVLASLIVIANLLLALGIV) form a helical membrane-spanning segment. Residues 40 to 49 (LDRHLRSPPA) lie on the Cytoplasmic side of the membrane. Residues 50–70 (GCFFLSLLLAGLLTGLALPTL) form a helical membrane-spanning segment. Residues 71–84 (PGLWNRSHQGYWSC) lie on the Extracellular side of the membrane. A glycan (N-linked (GlcNAc...) asparagine) is linked at Asn75. Cys84 and Cys154 are disulfide-bonded. A helical membrane pass occupies residues 85–105 (LLLHLAPNFCFLSLLANLLLV). The Cytoplasmic portion of the chain corresponds to 106-124 (HGERYMAVLQPLRPHGSVR). The chain crosses the membrane as a helical span at residues 125 to 145 (LALFLTWISSLLFASLPALGW). At 146-157 (NHWSPGANCSSQ) the chain is on the extracellular side. Asn153 carries N-linked (GlcNAc...) asparagine glycosylation. The helical transmembrane segment at 158–178 (AIFPAPYLYLEVYGLLLPAVG) threads the bilayer. Residues 179-229 (ATALLSVRVLATAHHQLREIRRLERAVCRDAPSTLARALTWRQARAQAGAT) lie on the Cytoplasmic side of the membrane. Residues 230-250 (LLFLLCWGPYVATLLLSVLAY) traverse the membrane as a helical segment. Residues 251–260 (ERRPPLGPVT) lie on the Extracellular side of the membrane. Residues 261 to 281 (LLSLISLGSASAAVVPVAMGL) traverse the membrane as a helical segment. The Cytoplasmic segment spans residues 282 to 329 (GDQRYTAPWRTAAQRWLQVLRGRPKRANPGPSTAYHSSSQCSTDLDLN). Positions 306-329 (KRANPGPSTAYHSSSQCSTDLDLN) are disordered. Over residues 311 to 329 (GPSTAYHSSSQCSTDLDLN) the composition is skewed to polar residues.

The protein belongs to the G-protein coupled receptor 1 family.

The protein resides in the cell membrane. Its function is as follows. Receptor for bile acid. Bile acid-binding induces its internalization, activation of extracellular signal-regulated kinase and intracellular cAMP production. May be involved in the suppression of macrophage functions by bile acids. Involved in bile acid promoted GLP1R secretion. This chain is G-protein coupled bile acid receptor 1 (Gpbar1), found in Rattus norvegicus (Rat).